A 427-amino-acid chain; its full sequence is G2/mitotic-specific cyclin-3 (427 aa).

Over residues 1 to 12 (MHHNSQSLSSGH) the composition is skewed to polar residues. Disordered stretches follow at residues 1–29 (MHHNSQSLSSGHIRSPEDENVAPIGNLKH) and 89–126 (SVAQRKEADHNDLLTDREQEEPVEDDGESEEDEEEDQE). A compositionally biased stretch (basic and acidic residues) spans 89 to 105 (SVAQRKEADHNDLLTDR). The segment covering 106-126 (EQEEPVEDDGESEEDEEEDQE) has biased composition (acidic residues).

The protein belongs to the cyclin family. Cyclin AB subfamily.

Essential for the control of the cell cycle at the G2/M (mitosis) transition. Interacts with the CDC2 protein kinase to form MPF. G2/M cyclins accumulate steadily during G2 and are abruptly destroyed at mitosis. This Saccharomyces cerevisiae (strain ATCC 204508 / S288c) (Baker's yeast) protein is G2/mitotic-specific cyclin-3 (CLB3).